The chain runs to 252 residues: Deoxyuridine 5'-triphosphate nucleotidohydrolase, mitochondrial (252 aa).

A mitochondrion-targeting transit peptide spans 1–69; it reads MTPLCPRPAL…AGRLSQGCRG (69 aa). Residues C11, S88, and S99 each carry the phosphoserine modification. A disordered region spans residues 78-104; it reads WKGELPKAGGSPAPGPETPAISPSKRA. DUTP-binding positions include 173–175, 187–193, G198, R241, and 246–247; these read RSG, GVIDEDY, and FG.

This sequence belongs to the dUTPase family. Homotrimer. Mg(2+) serves as cofactor. Post-translationally, nuclear isoform 2 is phosphorylated in vivo on Ser-11, a reaction that can be catalyzed in vitro by CDC2. Phosphorylation in mature T-cells occurs in a cell cycle-dependent manner. Isoform 3 is not phosphorylated. As to expression, found in a variety of tissues. Isoform 3 expression is constitutive, while isoform 2 expression correlates with the onset of DNA replication (at protein level). Isoform 2 degradation coincides with the cessation of nuclear DNA replication (at protein level).

The protein resides in the nucleus. It localises to the mitochondrion. The catalysed reaction is dUTP + H2O = dUMP + diphosphate + H(+). The protein operates within pyrimidine metabolism; dUMP biosynthesis; dUMP from dCTP (dUTP route): step 2/2. With respect to regulation, phosphorylation is necessary for activity. Functionally, catalyzes the cleavage of 2'-deoxyuridine 5'-triphosphate (dUTP) into 2'-deoxyuridine 5'-monophosphate (dUMP) and inorganic pyrophosphate and through its action efficiently prevents uracil misincorporation into DNA and at the same time provides dUMP, the substrate for de novo thymidylate biosynthesis. Inhibits peroxisome proliferator-activated receptor (PPAR) activity by binding of its N-terminal to PPAR, preventing the latter's dimerization with retinoid X receptor. Essential for embryonic development. In Homo sapiens (Human), this protein is Deoxyuridine 5'-triphosphate nucleotidohydrolase, mitochondrial (DUT).